Here is an 89-residue protein sequence, read N- to C-terminus: Small ribosomal subunit protein uS15 (89 aa).

Belongs to the universal ribosomal protein uS15 family. Part of the 30S ribosomal subunit. Forms a bridge to the 50S subunit in the 70S ribosome, contacting the 23S rRNA.

Its function is as follows. One of the primary rRNA binding proteins, it binds directly to 16S rRNA where it helps nucleate assembly of the platform of the 30S subunit by binding and bridging several RNA helices of the 16S rRNA. Forms an intersubunit bridge (bridge B4) with the 23S rRNA of the 50S subunit in the ribosome. The chain is Small ribosomal subunit protein uS15 from Chloroherpeton thalassium (strain ATCC 35110 / GB-78).